A 96-amino-acid chain; its full sequence is UPF0298 protein LCA_1075 (96 aa).

This sequence belongs to the UPF0298 family.

Its subcellular location is the cytoplasm. The chain is UPF0298 protein LCA_1075 from Latilactobacillus sakei subsp. sakei (strain 23K) (Lactobacillus sakei subsp. sakei).